A 198-amino-acid chain; its full sequence is Na(+)-translocating NADH-quinone reductase subunit E (198 aa).

6 helical membrane passes run 11–31 (AVFIENMALAFFLGMCTFLAV), 39–59 (FGLGIAVTVVLGLSVPLNNLV), 77–97 (FLNFITFIGVIAALVQILEMI), 109–129 (LGIFLPLITVNCAIFGGVSFM), 140–160 (IVYGFGSGIGWMLAIVLLASI), and 176–196 (LGVTFVTTGLMALGFMSFSGV).

It belongs to the NqrDE/RnfAE family. In terms of assembly, composed of six subunits; NqrA, NqrB, NqrC, NqrD, NqrE and NqrF.

The protein localises to the cell inner membrane. The enzyme catalyses a ubiquinone + n Na(+)(in) + NADH + H(+) = a ubiquinol + n Na(+)(out) + NAD(+). NQR complex catalyzes the reduction of ubiquinone-1 to ubiquinol by two successive reactions, coupled with the transport of Na(+) ions from the cytoplasm to the periplasm. NqrA to NqrE are probably involved in the second step, the conversion of ubisemiquinone to ubiquinol. This chain is Na(+)-translocating NADH-quinone reductase subunit E, found in Proteus mirabilis (strain HI4320).